We begin with the raw amino-acid sequence, 277 residues long: Phosphoenolpyruvate synthase regulatory protein (277 aa).

157–164 (GVSRCGKT) contributes to the ADP binding site.

The protein belongs to the pyruvate, phosphate/water dikinase regulatory protein family. PSRP subfamily.

It carries out the reaction [pyruvate, water dikinase] + ADP = [pyruvate, water dikinase]-phosphate + AMP + H(+). It catalyses the reaction [pyruvate, water dikinase]-phosphate + phosphate + H(+) = [pyruvate, water dikinase] + diphosphate. Bifunctional serine/threonine kinase and phosphorylase involved in the regulation of the phosphoenolpyruvate synthase (PEPS) by catalyzing its phosphorylation/dephosphorylation. This is Phosphoenolpyruvate synthase regulatory protein from Salmonella agona (strain SL483).